The primary structure comprises 548 residues: Glutamyl-tRNA(Gln) amidotransferase subunit B, chloroplastic/mitochondrial (548 aa).

This sequence belongs to the GatB/GatE family. GatB subfamily. As to quaternary structure, subunit of the heterotrimeric GatCAB amidotransferase (AdT) complex, composed of A, B and C subunits.

It is found in the mitochondrion. The protein localises to the plastid. Its subcellular location is the chloroplast. It catalyses the reaction L-glutamyl-tRNA(Gln) + L-glutamine + ATP + H2O = L-glutaminyl-tRNA(Gln) + L-glutamate + ADP + phosphate + H(+). In terms of biological role, allows the formation of correctly charged Gln-tRNA(Gln) through the transamidation of misacylated Glu-tRNA(Gln) in chloroplasts and mitochondria. The reaction takes place in the presence of glutamine and ATP through an activated gamma-phospho-Glu-tRNA(Gln). The polypeptide is Glutamyl-tRNA(Gln) amidotransferase subunit B, chloroplastic/mitochondrial (Sorghum bicolor (Sorghum)).